The following is a 477-amino-acid chain: Ribulose bisphosphate carboxylase large chain (477 aa).

Positions 1–2 are excised as a propeptide; that stretch reads MS. P3 is subject to N-acetylproline. K14 carries the N6,N6,N6-trimethyllysine modification. Substrate is bound by residues N123 and T173. Residue K175 is the Proton acceptor of the active site. Substrate is bound at residue K177. Residues K201, D203, and E204 each contribute to the Mg(2+) site. K201 bears the N6-carboxylysine mark. H294 acts as the Proton acceptor in catalysis. 3 residues coordinate substrate: R295, H327, and S379.

It belongs to the RuBisCO large chain family. Type I subfamily. As to quaternary structure, heterohexadecamer of 8 large chains and 8 small chains; disulfide-linked. The disulfide link is formed within the large subunit homodimers. It depends on Mg(2+) as a cofactor. The disulfide bond which can form in the large chain dimeric partners within the hexadecamer appears to be associated with oxidative stress and protein turnover.

Its subcellular location is the plastid. The protein localises to the chloroplast. It carries out the reaction 2 (2R)-3-phosphoglycerate + 2 H(+) = D-ribulose 1,5-bisphosphate + CO2 + H2O. The catalysed reaction is D-ribulose 1,5-bisphosphate + O2 = 2-phosphoglycolate + (2R)-3-phosphoglycerate + 2 H(+). RuBisCO catalyzes two reactions: the carboxylation of D-ribulose 1,5-bisphosphate, the primary event in carbon dioxide fixation, as well as the oxidative fragmentation of the pentose substrate in the photorespiration process. Both reactions occur simultaneously and in competition at the same active site. This chain is Ribulose bisphosphate carboxylase large chain, found in Hyophorbe lagenicaulis (Bottle palm).